The sequence spans 45 residues: Toxin Bcs III 15.09 (45 aa).

One can recognise an EGF-like domain in the interval 2 to 44 (QGTACTGEHAHNFCLNGGTCRHIQSLGEYYCICPEGYTGHRCE). Disulfide bonds link Cys6/Cys21, Cys15/Cys32, and Cys34/Cys43.

Its subcellular location is the secreted. It is found in the nematocyst. Its function is as follows. Has both toxic and EGF activity. This chain is Toxin Bcs III 15.09, found in Bunodosoma caissarum (Sea anemone).